The following is a 328-amino-acid chain: Malate dehydrogenase (328 aa).

12–18 (GAAGQIG) provides a ligand contact to NAD(+). Positions 95 and 101 each coordinate substrate. NAD(+)-binding positions include asparagine 108, glutamine 115, and 132 to 134 (VGN). 2 residues coordinate substrate: asparagine 134 and arginine 165. Histidine 190 serves as the catalytic Proton acceptor.

This sequence belongs to the LDH/MDH superfamily. MDH type 2 family.

The catalysed reaction is (S)-malate + NAD(+) = oxaloacetate + NADH + H(+). Functionally, catalyzes the reversible oxidation of malate to oxaloacetate. This chain is Malate dehydrogenase, found in Variovorax paradoxus (strain S110).